We begin with the raw amino-acid sequence, 233 residues long: Large ribosomal subunit protein uL1 (233 aa).

This sequence belongs to the universal ribosomal protein uL1 family. Part of the 50S ribosomal subunit.

Binds directly to 23S rRNA. The L1 stalk is quite mobile in the ribosome, and is involved in E site tRNA release. Functionally, protein L1 is also a translational repressor protein, it controls the translation of the L11 operon by binding to its mRNA. The polypeptide is Large ribosomal subunit protein uL1 (Photobacterium profundum (strain SS9)).